Reading from the N-terminus, the 386-residue chain is DNase toxin Tse7 (386 aa).

As to quaternary structure, interacts with Tsi7.

It carries out the reaction Endonucleolytic cleavage to 5'-phosphodinucleotide and 5'-phosphooligonucleotide end-products.. Type VI secretion exported toxin that via to its DNase activity induces growth arrest and ultimately DNA degradation within target cell. The activity is initially neutralized by a cognate immunity protein Tsi7. This chain is DNase toxin Tse7, found in Pseudomonas aeruginosa (strain ATCC 15692 / DSM 22644 / CIP 104116 / JCM 14847 / LMG 12228 / 1C / PRS 101 / PAO1).